A 388-amino-acid chain; its full sequence is Formate-dependent phosphoribosylglycinamide formyltransferase (388 aa).

N(1)-(5-phospho-beta-D-ribosyl)glycinamide contacts are provided by residues 11-12 (EL) and glutamate 71. ATP-binding positions include arginine 103, lysine 144, 149 to 154 (SSGKGQ), 184 to 187 (EEFI), and glutamate 192. In terms of domain architecture, ATP-grasp spans 108–300 (DLAAKELGLK…EFELHLRAVL (193 aa)). Positions 257 and 270 each coordinate Mg(2+). N(1)-(5-phospho-beta-D-ribosyl)glycinamide contacts are provided by residues aspartate 277, lysine 349, and 356-357 (RR).

Belongs to the PurK/PurT family. As to quaternary structure, homodimer.

It carries out the reaction N(1)-(5-phospho-beta-D-ribosyl)glycinamide + formate + ATP = N(2)-formyl-N(1)-(5-phospho-beta-D-ribosyl)glycinamide + ADP + phosphate + H(+). It participates in purine metabolism; IMP biosynthesis via de novo pathway; N(2)-formyl-N(1)-(5-phospho-D-ribosyl)glycinamide from N(1)-(5-phospho-D-ribosyl)glycinamide (formate route): step 1/1. In terms of biological role, involved in the de novo purine biosynthesis. Catalyzes the transfer of formate to 5-phospho-ribosyl-glycinamide (GAR), producing 5-phospho-ribosyl-N-formylglycinamide (FGAR). Formate is provided by PurU via hydrolysis of 10-formyl-tetrahydrofolate. The protein is Formate-dependent phosphoribosylglycinamide formyltransferase of Bacteroides fragilis (strain ATCC 25285 / DSM 2151 / CCUG 4856 / JCM 11019 / LMG 10263 / NCTC 9343 / Onslow / VPI 2553 / EN-2).